The sequence spans 67 residues: Disintegrin EC3A (67 aa).

In terms of domain architecture, Disintegrin spans Asn1–Lys65. Cystine bridges form between Cys6/Cys29, Cys20/Cys26, Cys25/Cys50, and Cys38/Cys57. The short motif at Val42–Asp44 is the Cell attachment site; atypical (VGD) element.

Belongs to the venom metalloproteinase (M12B) family. P-II subfamily. P-IIe sub-subfamily. Heterodimer with EC3B; disulfide-linked. Expressed by the venom gland.

The protein resides in the secreted. Its function is as follows. Inhibits adhesion of cells expressing alpha-4/beta-1 (ITGA4/ITGB1) and alpha-4/beta-7 (ITGA4/ITGB7) integrins to the natural ligands vascular cell adhesion molecule 1 (VCAM-1) and mucosal addressin cell adhesion molecule 1 (MADCAM-1). It is also a weaker inhibitor of alpha-5/beta-1 (ITGA5/ITGB1) and alpha-2b/beta-3 (ITGA2B/ITGB3) integrins. The inhibitory activity of EC3 towards alpha-4 integrins is associated with the MLD sequence of EC3B subunit. The ability of EC3 to inhibit ITGA5/ITGB1 resides in both subunits A and B. This is Disintegrin EC3A from Echis carinatus (Saw-scaled viper).